A 128-amino-acid chain; its full sequence is Large ribosomal subunit protein bL17 (128 aa).

This sequence belongs to the bacterial ribosomal protein bL17 family. In terms of assembly, part of the 50S ribosomal subunit. Contacts protein L32.

This Pseudomonas syringae pv. tomato (strain ATCC BAA-871 / DC3000) protein is Large ribosomal subunit protein bL17.